Consider the following 160-residue polypeptide: Snaclec subunit A (160 aa).

An N-terminal signal peptide occupies residues 1–23 (MGRFILVNLGLLVVAFSLRGSEA). Intrachain disulfides connect Cys-25/Cys-36, Cys-53/Cys-150, and Cys-125/Cys-142. Residues 32-151 (YDKYCYKVFD…CDFTLPFICK (120 aa)) enclose the C-type lectin domain.

Belongs to the snaclec family. In terms of assembly, heterodimer of subunits A and B; disulfide-linked. In terms of tissue distribution, expressed by the venom gland.

It is found in the secreted. Functionally, interferes with one step of hemostasis (modulation of platelet aggregation, or coagulation cascade, for example). The chain is Snaclec subunit A from Philodryas olfersii (Green snake).